Here is a 453-residue protein sequence, read N- to C-terminus: Glutamyl-tRNA reductase (453 aa).

Residues 54-57 (TCNR), Ser-113, 118-120 (EAQ), and Gln-124 contribute to the substrate site. Cys-55 (nucleophile) is an active-site residue. 193–198 (GGGEVS) is an NADP(+) binding site.

It belongs to the glutamyl-tRNA reductase family. As to quaternary structure, homodimer.

The enzyme catalyses (S)-4-amino-5-oxopentanoate + tRNA(Glu) + NADP(+) = L-glutamyl-tRNA(Glu) + NADPH + H(+). The protein operates within porphyrin-containing compound metabolism; protoporphyrin-IX biosynthesis; 5-aminolevulinate from L-glutamyl-tRNA(Glu): step 1/2. It participates in porphyrin-containing compound metabolism; chlorophyll biosynthesis. Its function is as follows. Catalyzes the NADPH-dependent reduction of glutamyl-tRNA(Glu) to glutamate 1-semialdehyde (GSA). The protein is Glutamyl-tRNA reductase of Chloroflexus aggregans (strain MD-66 / DSM 9485).